An 887-amino-acid polypeptide reads, in one-letter code: Pyruvate dehydrogenase E1 component (887 aa).

As to quaternary structure, homodimer. Part of the PDH complex, consisting of multiple copies of pyruvate dehydrogenase (E1), dihydrolipoamide acetyltransferase (E2) and lipoamide dehydrogenase (E3). Thiamine diphosphate is required as a cofactor.

The enzyme catalyses N(6)-[(R)-lipoyl]-L-lysyl-[protein] + pyruvate + H(+) = N(6)-[(R)-S(8)-acetyldihydrolipoyl]-L-lysyl-[protein] + CO2. Functionally, component of the pyruvate dehydrogenase (PDH) complex, that catalyzes the overall conversion of pyruvate to acetyl-CoA and CO(2). The protein is Pyruvate dehydrogenase E1 component (aceE) of Buchnera aphidicola subsp. Acyrthosiphon pisum (strain APS) (Acyrthosiphon pisum symbiotic bacterium).